The chain runs to 149 residues: SPbeta prophage-derived putative transcriptional regulator YosT (149 aa).

The sequence is that of SPbeta prophage-derived putative transcriptional regulator YosT (yosT) from Bacillus subtilis (strain 168).